The following is a 138-amino-acid chain: ATP synthase epsilon chain (138 aa).

This sequence belongs to the ATPase epsilon chain family. F-type ATPases have 2 components, CF(1) - the catalytic core - and CF(0) - the membrane proton channel. CF(1) has five subunits: alpha(3), beta(3), gamma(1), delta(1), epsilon(1). CF(0) has three main subunits: a, b and c.

The protein localises to the cell inner membrane. In terms of biological role, produces ATP from ADP in the presence of a proton gradient across the membrane. The protein is ATP synthase epsilon chain of Geotalea uraniireducens (strain Rf4) (Geobacter uraniireducens).